Here is a 488-residue protein sequence, read N- to C-terminus: Probable G-protein coupled receptor Mth-like 12 (488 aa).

Residues 1 to 17 (MFLWLKCFCTLIIVTIA) form the signal peptide. The Extracellular segment spans residues 18 to 215 (KNSSAKIPHC…NRRCYRNVMP (198 aa)). Asn-19, Asn-34, and Asn-55 each carry an N-linked (GlcNAc...) asparagine glycan. Cystine bridges form between Cys-27-Cys-81, Cys-83-Cys-88, Cys-92-Cys-189, Cys-93-Cys-104, and Cys-155-Cys-209. Residue Asn-141 is glycosylated (N-linked (GlcNAc...) asparagine). The chain crosses the membrane as a helical span at residues 216-236 (GIAQLSVISVVGFILTLAVYL). Topologically, residues 237–247 (SVEKLRNLLGK) are cytoplasmic. Residues 248–268 (CLICSLFSMFMEYFIWTMDYF) traverse the membrane as a helical segment. The Extracellular portion of the chain corresponds to 269–283 (RLLQSICSAAGYMKY). A helical membrane pass occupies residues 284 to 304 (FFSMSSYLWFSVVSFHLWELF). At 305–315 (TSLNRHEPQYR) the chain is on the cytoplasmic side. The helical transmembrane segment at 316 to 336 (FLIYNTFVWCTAAIPTVVIFS) threads the bilayer. Topologically, residues 337 to 373 (MNQMWENDPGKSEWLPLVGYFGCSVKDWNSSSWFYSH) are extracellular. Asn-365 carries an N-linked (GlcNAc...) asparagine glycan. Residues 374–394 (IPIVILNSFNVIMFVLTAIYI) traverse the membrane as a helical segment. Over 395-416 (WKVKKGVKSFAQHDERNTTCLE) the chain is Cytoplasmic. A helical transmembrane segment spans residues 417 to 437 (FNVQTYIQFVRLFLIMGASWL). The Extracellular portion of the chain corresponds to 438–454 (LDQLTRLAEDSHLLLDT). A helical membrane pass occupies residues 455–475 (IVLNLTVYLNAAFGILIFVLL). Topologically, residues 476–488 (ILKGSTFKMIMER) are cytoplasmic.

This sequence belongs to the G-protein coupled receptor 2 family. Mth subfamily.

The protein resides in the cell membrane. The polypeptide is Probable G-protein coupled receptor Mth-like 12 (mthl12) (Drosophila melanogaster (Fruit fly)).